Here is a 436-residue protein sequence, read N- to C-terminus: Serine protease hepsin (436 aa).

A disordered region spans residues 1-29 (MAKEDEEPGAHRGGSTCSRPQPGKGGRTA). Topologically, residues 1 to 38 (MAKEDEEPGAHRGGSTCSRPQPGKGGRTAACCSRPKVA) are cytoplasmic. Residues 39-59 (ALIVGTLLFLTGIGAASWAIV) form a helical; Signal-anchor for type II membrane protein membrane-spanning segment. Over 60-436 (TILLQSDQEP…SEASGMVTQP (377 aa)) the chain is Extracellular. The SRCR domain occupies 73–170 (VQLSPGDSRL…RGRFLTATCQ (98 aa)). Intrachain disulfides connect C96/C159, C109/C169, C138/C157, C172/C296, C207/C223, C310/C378, C341/C357, and C368/C400. An N-linked (GlcNAc...) asparagine glycan is attached at N131. A Peptidase S1 domain is found at 182-424 (IVGGQDSSLG…FREWIFKAIK (243 aa)). Active-site charge relay system residues include H222 and D276. S372 (charge relay system) is an active-site residue.

It belongs to the peptidase S1 family. Detected in kidney, in thick ascending tubule epithelial cells (at protein level). Detected in kidney and liver.

It is found in the apical cell membrane. The protein resides in the cell membrane. The protein localises to the secreted. It carries out the reaction Cleavage after basic amino-acid residues, with Arg strongly preferred to Lys.. In terms of biological role, serine protease that cleaves extracellular substrates, and contributes to the proteolytic processing of growth factors, such as HGF and MST1/HGFL. Plays a role in cell growth and maintenance of cell morphology. Plays a role in the proteolytic processing of ACE2. Mediates the proteolytic cleavage of urinary UMOD that is required for UMOD polymerization. The protein is Serine protease hepsin (Hpn) of Mus musculus (Mouse).